We begin with the raw amino-acid sequence, 550 residues long: Cytochrome P450 monooxygenase FFUJ_09176 (550 aa).

An N-terminal signal peptide occupies residues 1-31 (MLQTIPMPSRELTIALAVLSLLMVLVQRAGS). Residues 430–441 (FIPERFEGDTRS) show a composition bias toward basic and acidic residues. Residues 430–451 (FIPERFEGDTRSSQESAASPDV) form a disordered region. Cysteine 466 lines the heme pocket.

The protein belongs to the cytochrome P450 family.

Functionally, cytochrome P450 monooxygenase; part of the DMATS1 gene cluster that mediates the biosynthesis of a reversely N-prenylated monomeric L-tryptophan (r-N-DMAT). Seems not to contribute to the final DMATS1 product. The polypeptide is Cytochrome P450 monooxygenase FFUJ_09176 (Gibberella fujikuroi (strain CBS 195.34 / IMI 58289 / NRRL A-6831) (Bakanae and foot rot disease fungus)).